Reading from the N-terminus, the 71-residue chain is Small ribosomal subunit protein bS21 (71 aa).

Residues 40-71 form a disordered region; it reads KPTQERKRKAAAAVKRNIRRTSRDVTKRKRLY. A compositionally biased stretch (basic residues) spans 45-71; it reads RKRKAAAAVKRNIRRTSRDVTKRKRLY.

It belongs to the bacterial ribosomal protein bS21 family.

This chain is Small ribosomal subunit protein bS21, found in Xylella fastidiosa (strain M23).